Reading from the N-terminus, the 334-residue chain is Leucine-rich repeat-containing protein 26 (334 aa).

Positions 1–30 (MRGSFFSRLPPQLSLLLLLLLLLSWRRVWT) are cleaved as a signal peptide. Residues 31 to 265 (QEHIGTDPSK…QCTQSLAARD (235 aa)) are Extracellular-facing. The 38-residue stretch at 38 to 75 (PSKSPVAPVCPEACSCSPGGKANCSALALPAVPAGLSW) folds into the LRRNT domain. 2 disulfides stabilise this stretch: cysteine 47–cysteine 53 and cysteine 51–cysteine 61. 5 LRR repeats span residues 76 to 97 (QVRS…AFAD), 100 to 121 (ALLY…AFWG), 124 to 145 (VLQR…TFTP), 148 to 169 (ALSF…ILGP), and 172 to 194 (LLRV…LNSL). The LRRCT domain occupies 205–259 (NPWACSCALRPLCTWLRKHPRPTSETETLLCVSPKLQTLNLLTDFPDNAFKQCTQ). Intrachain disulfides connect cysteine 209–cysteine 235 and cysteine 211–cysteine 257. A helical transmembrane segment spans residues 266–286 (LAVVYALGPASFLASLAICLA). Residues 287–334 (LGSVLTACGARRRRRRTTVRHLIRRQPDPEGPASLEDVGSPTTTAIQA) are Cytoplasmic-facing. Residues 312–334 (QPDPEGPASLEDVGSPTTTAIQA) form a disordered region.

Interacts with KCNMA1.

Its subcellular location is the cell membrane. The protein resides in the cytoplasm. The protein localises to the cytoskeleton. Functionally, auxiliary protein of the large-conductance, voltage and calcium-activated potassium channel (BK alpha). Required for the conversion of BK alpha channels from a high-voltage to a low-voltage activated channel type in non-excitable cells. These are characterized by negative membrane voltages and constant low levels of calcium. This chain is Leucine-rich repeat-containing protein 26 (Lrrc26), found in Rattus norvegicus (Rat).